The primary structure comprises 463 residues: RuvB-like 2 (463 aa).

Alanine 2 is subject to N-acetylalanine. A Glycyl lysine isopeptide (Lys-Gly) (interchain with G-Cter in SUMO2) cross-link involves residue lysine 9. Glycine 77–threonine 84 provides a ligand contact to ATP. Serine 437 is subject to Phosphoserine. Residues lysine 444 and lysine 456 each participate in a glycyl lysine isopeptide (Lys-Gly) (interchain with G-Cter in SUMO2) cross-link.

It belongs to the RuvB family. As to quaternary structure, forms homohexameric rings. Can form a dodecamer with RUVBL1 made of two stacked hexameric rings; however, even though RUVBL1 and RUVBL2 are present in equimolar ratio, the oligomeric status of each hexamer is not known. Oligomerization may regulate binding to nucleic acids and conversely, binding to nucleic acids may affect the dodecameric assembly. Interaction of the complex with DHX34 results in conformational changes of the N-terminus of the RUVBL2 subunits, resulting in loss of nucleotide binding ability and ATP hydrolysis of the complex. Interacts with the transcriptional activation domain of MYC. Interacts with ATF2. Component of the RNA polymerase II holoenzyme complex. May also act to bridge the LEF1/TCF1-CTNNB1 complex and TBP. Component of the NuA4 histone acetyltransferase complex which contains the catalytic subunit KAT5/TIP60 and the subunits EP400, TRRAP/PAF400, BRD8/SMAP, EPC1, DMAP1/DNMAP1, RUVBL1/TIP49, RUVBL2, ING3, actin, ACTL6A/BAF53A, MORF4L1/MRG15, MORF4L2/MRGX, MRGBP, YEATS4/GAS41, VPS72/YL1 and MEAF6. The NuA4 complex interacts with MYC and the adenovirus E1A protein. RUVBL2 interacts with EP400. Component of a NuA4-related complex which contains EP400, TRRAP/PAF400, SRCAP, BRD8/SMAP, EPC1, DMAP1/DNMAP1, RUVBL1/TIP49, RUVBL2, actin, ACTL6A/BAF53A, VPS72 and YEATS4/GAS41. Interacts with NPAT. Component of the chromatin-remodeling INO80 complex; specifically part of a complex module associated with the helicase ATP-binding and the helicase C-terminal domain of INO80. Component of some MLL1/MLL complex, at least composed of the core components KMT2A/MLL1, ASH2L, HCFC1/HCF1, WDR5 and RBBP5, as well as the facultative components BACC1, CHD8, E2F6, HSP70, INO80C, KANSL1, LAS1L, MAX, MCRS1, MGA, MYST1/MOF, PELP1, PHF20, PRP31, RING2, RUVB1/TIP49A, RUVB2/TIP49B, SENP3, TAF1, TAF4, TAF6, TAF7, TAF9 and TEX10. Interacts with IGHMBP2. Interacts with TELO2. Interacts with HINT1. Component of a SWR1-like complex. Component of the R2TP complex composed at least of RUVBL1, RUVBL2, RPAP3 and PIHD1. Component of the PAQosome complex which is responsible for the biogenesis of several protein complexes and which consists of R2TP complex members RUVBL1, RUVBL2, RPAP3 and PIH1D1, URI complex members PFDN2, PFDN6, PDRG1, UXT and URI1 as well as ASDURF, POLR2E and DNAAF10/WDR92. Interacts with ITFG1. Interacts with ZMYND10. Interacts with WAC; WAC positively regulates MTOR activity by promoting the assembly of the TTT complex composed of TELO2, TTI1 and TTI2 and the RUVBL complex composed of RUVBL1 and RUVBL2 into the TTT-RUVBL complex which leads to the dimerization of the mTORC1 complex and its subsequent activation. Forms a complex with APPL1 and APPL2. Interacts with ZNHIT2 (via HIT-type zinc finger) in the presence of ATP or ADP; shows a stronger interaction in the presence of ADP. The RUVBL1/RUVBL2 complex interacts with ZNHIT1 (via HIT-type zinc finger), ZNHIT3 (via HIT-type zinc finger), ZNHIT6 (via HIT-type zinc finger) and DDX59/ZNHIT5 (via HIT-type zinc finger) in the presence of ADP. Interacts with NOPCHAP1; the interaction is direct and disrupted upon ATP binding. Interacts with SMG1.

The protein resides in the nucleus matrix. The protein localises to the nucleus. It localises to the nucleoplasm. It is found in the cytoplasm. Its subcellular location is the membrane. The protein resides in the dynein axonemal particle. It catalyses the reaction ATP + H2O = ADP + phosphate + H(+). Functionally, possesses single-stranded DNA-stimulated ATPase and ATP-dependent DNA helicase (5' to 3') activity; hexamerization is thought to be critical for ATP hydrolysis and adjacent subunits in the ring-like structure contribute to the ATPase activity. Component of the NuA4 histone acetyltransferase complex which is involved in transcriptional activation of select genes principally by acetylation of nucleosomal histones H4 and H2A. This modification may both alter nucleosome-DNA interactions and promote interaction of the modified histones with other proteins which positively regulate transcription. This complex may be required for the activation of transcriptional programs associated with oncogene and proto-oncogene mediated growth induction, tumor suppressor mediated growth arrest and replicative senescence, apoptosis, and DNA repair. The NuA4 complex ATPase and helicase activities seem to be, at least in part, contributed by the association of RUVBL1 and RUVBL2 with EP400. NuA4 may also play a direct role in DNA repair when recruited to sites of DNA damage. Component of a SWR1-like complex that specifically mediates the removal of histone H2A.Z/H2AZ1 from the nucleosome. Proposed core component of the chromatin remodeling INO80 complex which exhibits DNA- and nucleosome-activated ATPase activity and catalyzes ATP-dependent nucleosome sliding. Plays an essential role in oncogenic transformation by MYC and also modulates transcriptional activation by the LEF1/TCF1-CTNNB1 complex. May also inhibit the transcriptional activity of ATF2. Involved in the endoplasmic reticulum (ER)-associated degradation (ERAD) pathway where it negatively regulates expression of ER stress response genes. May play a role in regulating the composition of the U5 snRNP complex. This chain is RuvB-like 2 (Ruvbl2), found in Mus musculus (Mouse).